A 258-amino-acid polypeptide reads, in one-letter code: Global transcriptional regulator CodY (258 aa).

Residues 1–156 are GAF domain; it reads MSSLLDKTRM…SATIIGLEIL (156 aa). Residues 204–223 constitute a DNA-binding region (H-T-H motif); the sequence is ASKIADKVGITRSVIVNALR.

Belongs to the CodY family.

Its subcellular location is the cytoplasm. DNA-binding global transcriptional regulator which is involved in the adaptive response to starvation and acts by directly or indirectly controlling the expression of numerous genes in response to nutrient availability. During rapid exponential growth, CodY is highly active and represses genes whose products allow adaptation to nutrient depletion. The chain is Global transcriptional regulator CodY from Clostridium botulinum (strain Okra / Type B1).